The sequence spans 185 residues: 4-hydroxy-tetrahydrodipicolinate reductase (185 aa).

NAD(+) contacts are provided by residues 12–17 and Glu38; that span reads GAGGRM. NADP(+) is bound at residue Arg39. NAD(+) contacts are provided by residues 102 to 104 and 126 to 129; these read GTT and AANF. Residue His159 is the Proton donor/acceptor of the active site. His160 provides a ligand contact to (S)-2,3,4,5-tetrahydrodipicolinate. Lys163 acts as the Proton donor in catalysis. Residue 169 to 170 participates in (S)-2,3,4,5-tetrahydrodipicolinate binding; it reads GT.

Belongs to the DapB family. Homotetramer.

Its subcellular location is the cytoplasm. The catalysed reaction is (S)-2,3,4,5-tetrahydrodipicolinate + NAD(+) + H2O = (2S,4S)-4-hydroxy-2,3,4,5-tetrahydrodipicolinate + NADH + H(+). It carries out the reaction (S)-2,3,4,5-tetrahydrodipicolinate + NADP(+) + H2O = (2S,4S)-4-hydroxy-2,3,4,5-tetrahydrodipicolinate + NADPH + H(+). It participates in amino-acid biosynthesis; L-lysine biosynthesis via DAP pathway; (S)-tetrahydrodipicolinate from L-aspartate: step 4/4. Functionally, catalyzes the conversion of 4-hydroxy-tetrahydrodipicolinate (HTPA) to tetrahydrodipicolinate. The protein is 4-hydroxy-tetrahydrodipicolinate reductase (dapB) of Klebsiella pneumoniae.